Reading from the N-terminus, the 385-residue chain is Branched-chain-amino-acid aminotransferase, cytosolic (385 aa).

An N6-(pyridoxal phosphate)lysine modification is found at lysine 221.

This sequence belongs to the class-IV pyridoxal-phosphate-dependent aminotransferase family. As to quaternary structure, homodimer. Pyridoxal 5'-phosphate serves as cofactor. As to expression, expressed in muscles.

Its subcellular location is the cytoplasm. It carries out the reaction L-leucine + 2-oxoglutarate = 4-methyl-2-oxopentanoate + L-glutamate. It catalyses the reaction L-isoleucine + 2-oxoglutarate = (S)-3-methyl-2-oxopentanoate + L-glutamate. The catalysed reaction is L-valine + 2-oxoglutarate = 3-methyl-2-oxobutanoate + L-glutamate. Catalyzes the first reaction in the catabolism of the essential branched chain amino acids leucine, isoleucine, and valine. This chain is Branched-chain-amino-acid aminotransferase, cytosolic (BCAT1), found in Ovis aries (Sheep).